The primary structure comprises 288 residues: Diaminopimelate epimerase (288 aa).

2 residues coordinate substrate: Asn-14 and Asn-67. Cys-76 (proton donor) is an active-site residue. Substrate-binding positions include 77–78, Asn-166, Asn-199, and 217–218; these read GN and ER. Cys-226 (proton acceptor) is an active-site residue. 227 to 228 is a binding site for substrate; the sequence is GT.

It belongs to the diaminopimelate epimerase family. As to quaternary structure, homodimer.

It localises to the cytoplasm. It catalyses the reaction (2S,6S)-2,6-diaminopimelate = meso-2,6-diaminopimelate. It functions in the pathway amino-acid biosynthesis; L-lysine biosynthesis via DAP pathway; DL-2,6-diaminopimelate from LL-2,6-diaminopimelate: step 1/1. Its function is as follows. Catalyzes the stereoinversion of LL-2,6-diaminopimelate (L,L-DAP) to meso-diaminopimelate (meso-DAP), a precursor of L-lysine and an essential component of the bacterial peptidoglycan. This chain is Diaminopimelate epimerase, found in Bacillus mycoides (strain KBAB4) (Bacillus weihenstephanensis).